The chain runs to 523 residues: Peptidyl-prolyl cis-trans isomerase 4 (523 aa).

One can recognise a U-box domain in the interval 38-111 (KRLPINHCSL…GKFRCPVTFR (74 aa)). Residues 278–433 (KNAFVRLVTN…VSVVIMRAEV (156 aa)) form the PPIase cyclophilin-type domain.

The protein belongs to the cyclophilin-type PPIase family. PPIL2 subfamily. In terms of assembly, interacts with mep-1. As to expression, exclusively in the larval body wall striated muscle cells.

It is found in the nucleus. It catalyses the reaction [protein]-peptidylproline (omega=180) = [protein]-peptidylproline (omega=0). The catalysed reaction is S-ubiquitinyl-[E2 ubiquitin-conjugating enzyme]-L-cysteine + [acceptor protein]-L-lysine = [E2 ubiquitin-conjugating enzyme]-L-cysteine + N(6)-ubiquitinyl-[acceptor protein]-L-lysine.. Its pathway is protein modification; protein ubiquitination. In terms of biological role, may catalyze the cis-trans isomerization of proline imidic peptide bonds in oligopeptides thereby assisting the folding of proteins. May also function as a chaperone, playing a role in intracellular transport of proteins. May also have a protein ubiquitin ligase activity acting as an E3 ubiquitin protein ligase or as a ubiquitin-ubiquitin ligase promoting elongation of ubiquitin chains on proteins. Influences the hermaphrodite switch from spermatogenesis to oogenesis. Required for body wall muscle cell development. The protein is Peptidyl-prolyl cis-trans isomerase 4 (cyn-4) of Caenorhabditis elegans.